The chain runs to 121 residues: Small ribosomal subunit protein uS13 (121 aa).

The tract at residues histidine 91 to lysine 121 is disordered. Basic residues predominate over residues alanine 106 to lysine 121.

This sequence belongs to the universal ribosomal protein uS13 family. Part of the 30S ribosomal subunit. Forms a loose heterodimer with protein S19. Forms two bridges to the 50S subunit in the 70S ribosome.

Located at the top of the head of the 30S subunit, it contacts several helices of the 16S rRNA. In the 70S ribosome it contacts the 23S rRNA (bridge B1a) and protein L5 of the 50S subunit (bridge B1b), connecting the 2 subunits; these bridges are implicated in subunit movement. Contacts the tRNAs in the A and P-sites. This is Small ribosomal subunit protein uS13 from Macrococcus caseolyticus (strain JCSC5402) (Macrococcoides caseolyticum).